Consider the following 234-residue polypeptide: Thiamine import ATP-binding protein ThiQ (234 aa).

One can recognise an ABC transporter domain in the interval 2-230; the sequence is LRFSDVKYRY…EKPPELTQYL (229 aa). Residue 32–39 coordinates ATP; it reads GPSGAGKS.

Belongs to the ABC transporter superfamily. Thiamine importer (TC 3.A.1.19.1) family. The complex is composed of two ATP-binding proteins (ThiQ), two transmembrane proteins (ThiP) and a solute-binding protein (ThiB).

Its subcellular location is the cell inner membrane. The enzyme catalyses thiamine(out) + ATP + H2O = thiamine(in) + ADP + phosphate + H(+). In terms of biological role, part of the ABC transporter complex ThiBPQ involved in thiamine import. Responsible for energy coupling to the transport system. This is Thiamine import ATP-binding protein ThiQ from Aliivibrio fischeri (strain ATCC 700601 / ES114) (Vibrio fischeri).